Consider the following 59-residue polypeptide: Small, acid-soluble spore protein C1 (59 aa).

It belongs to the alpha/beta-type SASP family. In terms of processing, SASP are degraded in the first minutes of spore germination and provide amino acids for both new protein synthesis and metabolism.

Functionally, SASP are bound to spore DNA. They are double-stranded DNA-binding proteins that cause DNA to change to an a-like conformation. They protect the DNA backbone from chemical and enzymatic cleavage and are thus involved in dormant spore's high resistance to UV light. The polypeptide is Small, acid-soluble spore protein C1 (sspC1) (Clostridium perfringens (strain 13 / Type A)).